We begin with the raw amino-acid sequence, 415 residues long: 3-isopropylmalate dehydratase large subunit (415 aa).

[4Fe-4S] cluster is bound by residues Cys-295, Cys-353, and Cys-356.

This sequence belongs to the aconitase/IPM isomerase family. LeuC type 2 subfamily. In terms of assembly, heterodimer of LeuC and LeuD. The cofactor is [4Fe-4S] cluster.

The enzyme catalyses (2R,3S)-3-isopropylmalate = (2S)-2-isopropylmalate. Its pathway is amino-acid biosynthesis; L-leucine biosynthesis; L-leucine from 3-methyl-2-oxobutanoate: step 2/4. Functionally, catalyzes the isomerization between 2-isopropylmalate and 3-isopropylmalate, via the formation of 2-isopropylmaleate. The chain is 3-isopropylmalate dehydratase large subunit from Pyrobaculum neutrophilum (strain DSM 2338 / JCM 9278 / NBRC 100436 / V24Sta) (Thermoproteus neutrophilus).